We begin with the raw amino-acid sequence, 78 residues long: Spermatid-specific protein T1 (78 aa).

A hydrophobic region spans residues 1–21; sequence MKVAANSSKMLAEKLELMKGG. Residues 1 to 78 form a disordered region; that stretch reads MKVAANSSKM…YSRRRYRRRR (78 aa). Residues 20–78 show a composition bias toward basic residues; it reads GGRRRRRRSRRRRRRSRRRSRSPYRRRYRRRRRRRRRRSRRRRYRRRRSYSRRRYRRRR.

In terms of processing, phosphorylation occurs at different degrees. The triphosphorylated form may be predominant in T1. SP1 appears to be phosphorylated in elongated spermatids, but dephosphorylated in mature sperm cells. As to expression, testis.

The protein localises to the nucleus. Its subcellular location is the chromosome. Functionally, cuttlefish spermiogenesis is characterized by a double nuclear protein transition: histones -&gt; spermatid-specific proteins (T1/T2) -&gt; protamines (SP1/SP2). The protamines compact sperm DNA into a highly condensed, stable and inactive complex. The chain is Spermatid-specific protein T1 from Sepia officinalis (Common cuttlefish).